Consider the following 115-residue polypeptide: NADH-ubiquinone oxidoreductase chain 3 (115 aa).

3 helical membrane-spanning segments follow: residues 4 to 24, 55 to 75, and 84 to 104; these read ALTLFTNTALASLLVLIAFWL, FFLVAITFLLFDLEIALLLPL, and LTTMLTMALLLISLLAASLAY.

It belongs to the complex I subunit 3 family. Core subunit of respiratory chain NADH dehydrogenase (Complex I) which is composed of 45 different subunits. Interacts with TMEM186. Interacts with TMEM242.

It localises to the mitochondrion inner membrane. The catalysed reaction is a ubiquinone + NADH + 5 H(+)(in) = a ubiquinol + NAD(+) + 4 H(+)(out). In terms of biological role, core subunit of the mitochondrial membrane respiratory chain NADH dehydrogenase (Complex I) which catalyzes electron transfer from NADH through the respiratory chain, using ubiquinone as an electron acceptor. Essential for the catalytic activity of complex I. The polypeptide is NADH-ubiquinone oxidoreductase chain 3 (Halichoerus grypus (Gray seal)).